We begin with the raw amino-acid sequence, 166 residues long: Small ribosomal subunit protein uS5 (166 aa).

The 64-residue stretch at 11-74 (LDDNVVAINR…EAAKKNLITV (64 aa)) folds into the S5 DRBM domain.

This sequence belongs to the universal ribosomal protein uS5 family. As to quaternary structure, part of the 30S ribosomal subunit. Contacts proteins S4 and S8.

In terms of biological role, with S4 and S12 plays an important role in translational accuracy. Located at the back of the 30S subunit body where it stabilizes the conformation of the head with respect to the body. The polypeptide is Small ribosomal subunit protein uS5 (Lactiplantibacillus plantarum (strain ATCC BAA-793 / NCIMB 8826 / WCFS1) (Lactobacillus plantarum)).